The primary structure comprises 90 residues: U7-theraphotoxin-Hhn1e (90 aa).

The N-terminal stretch at 1 to 19 (MKTAIFTVVLALAVFAVLS) is a signal peptide. Positions 20-50 (FGWEANEKALSEEFTELIHEKEAASETEARE) are excised as a propeptide. Disulfide bonds link Cys51-Cys65, Cys58-Cys70, and Cys64-Cys81.

It belongs to the neurotoxin 10 (Hwtx-1) family. 13 (Hntx-13) subfamily. Expressed by the venom gland.

The protein localises to the secreted. Its function is as follows. Ion channel inhibitor. This is U7-theraphotoxin-Hhn1e from Cyriopagopus hainanus (Chinese bird spider).